We begin with the raw amino-acid sequence, 1994 residues long: Protein-methionine sulfoxide oxidase mical3a (1994 aa).

The monooxygenase domain stretch occupies residues 2 to 498; that stretch reads GDGGVNAVGE…RHLLDTGETR (497 aa). Residues cysteine 101, 101–129, glutamate 120, arginine 122, arginine 127, asparagine 129, and aspartate 402 each bind FAD; that span reads CGLR…SRNN. In terms of domain architecture, Calponin-homology (CH) spans 521–627; it reads IVRSSKLLNW…YLSQFYEMFK (107 aa). Residues 666-708 form a disordered region; that stretch reads ISRKRNPKDKKEKELDGLGKRRKTSQAGQSEDEELQRANRDDR. The segment covering 674-684 has biased composition (basic and acidic residues); sequence DKKEKELDGLG. The LIM zinc-binding domain occupies 772 to 834; sequence DVCFFCRKRV…KPHYCYRLSG (63 aa). Disordered stretches follow at residues 843-900, 917-1064, 1176-1263, 1281-1476, 1493-1555, and 1598-1747; these read PAAA…LKGT, EELE…AEAR, SQPV…ELKK, LGLT…REEV, VEDT…SPEA, and KVAW…LRLR. 2 stretches are compositionally biased toward acidic residues: residues 917–926 and 951–961; these read EELEEVPEET and SDMEEEDEDAE. Residues 975–987 are compositionally biased toward basic and acidic residues; it reads EAVELHAKLKGES. 2 stretches are compositionally biased toward acidic residues: residues 1001–1037 and 1046–1060; these read GEMD…DPEA and PGTE…SDAE. Residues 1200–1215 show a composition bias toward polar residues; sequence PTGNPLSPICTQSQPC. Basic and acidic residues-rich tracts occupy residues 1249–1263 and 1287–1297; these read RTNE…ELKK and ERSKTAVEKSI. 2 stretches are compositionally biased toward low complexity: residues 1299–1314 and 1358–1368; these read KTPT…YTPE and SSSSGLGLNGS. Positions 1369-1389 are enriched in polar residues; that stretch reads VTTSQTAASDSYNNSDSTMLT. A compositionally biased stretch (pro residues) spans 1437–1458; the sequence is PVSPPQPKQKPVTAPVPTPRTN. Over residues 1464–1476 the composition is skewed to basic and acidic residues; the sequence is RVKEPNKPRREEV. Basic and acidic residues predominate over residues 1616 to 1635; the sequence is AQKDSAVKALESKKQADTLP. Residues 1649–1660 show a composition bias toward low complexity; it reads SSVTSSESSTGG. Residues 1661–1679 show a composition bias toward basic residues; that stretch reads KSKKRSSLFSPRKNKKEKK. Basic and acidic residues predominate over residues 1680 to 1693; sequence AKNERLSSTEETPP. Positions 1718–1729 are enriched in low complexity; the sequence is CPSTPSSSTTGD. Residues 1730–1746 show a composition bias toward basic and acidic residues; it reads SGKKKDSPLDRSSDLRL. 2 coiled-coil regions span residues 1796–1855 and 1894–1960; these read EEEL…KALR and QEKN…EQRD. The region spanning 1816-1982 is the bMERB domain; it reads KQEELKRLHR…EKEEDKDLEA (167 aa).

The protein belongs to the Mical family. The cofactor is FAD.

It localises to the cytoplasm. Its subcellular location is the cytoskeleton. It is found in the nucleus. It carries out the reaction L-methionyl-[F-actin] + NADPH + O2 + H(+) = L-methionyl-(R)-S-oxide-[F-actin] + NADP(+) + H2O. Its function is as follows. Monooxygenase that promotes depolymerization of F-actin by mediating oxidation of specific methionine residues on actin. Acts by modifying actin subunits through the addition of oxygen to form methionine-sulfoxide, leading to promote actin filament severing and prevent repolymerization. Involved in exocytic vesicles tethering and fusion: the monooxygenase activity is required for this process. The protein is Protein-methionine sulfoxide oxidase mical3a (mical3a) of Danio rerio (Zebrafish).